Here is a 213-residue protein sequence, read N- to C-terminus: Probable GTP-binding protein EngB (213 aa).

Positions 30–204 (EGFEVAFAGR…YTALAGWMEL (175 aa)) constitute an EngB-type G domain. Residues 38 to 45 (GRSNAGKS), 64 to 68 (GRTQL), 82 to 85 (DLPG), 149 to 152 (TKAD), and 182 to 185 (LFSA) contribute to the GTP site. Ser45 and Thr66 together coordinate Mg(2+).

The protein belongs to the TRAFAC class TrmE-Era-EngA-EngB-Septin-like GTPase superfamily. EngB GTPase family. Mg(2+) is required as a cofactor.

Its function is as follows. Necessary for normal cell division and for the maintenance of normal septation. This is Probable GTP-binding protein EngB from Pseudomonas fluorescens (strain SBW25).